The sequence spans 335 residues: Ketol-acid reductoisomerase (NADP(+)) 2 (335 aa).

The KARI N-terminal Rossmann domain maps to 1-180; sequence MKTYYEQDAN…GCTRAGVIET (180 aa). NADP(+) is bound by residues 24–27, arginine 47, serine 51, and 81–84; these read YGSQ and DEQQ. Histidine 106 is an active-site residue. Residue glycine 132 participates in NADP(+) binding. Residues 181-326 enclose the KARI C-terminal knotted domain; that stretch reads TFQEETETDL…EELREMMSWI (146 aa). Mg(2+) is bound by residues aspartate 189, glutamate 193, glutamate 225, and glutamate 229. A substrate-binding site is contributed by serine 250.

This sequence belongs to the ketol-acid reductoisomerase family. Mg(2+) serves as cofactor.

The enzyme catalyses (2R)-2,3-dihydroxy-3-methylbutanoate + NADP(+) = (2S)-2-acetolactate + NADPH + H(+). The catalysed reaction is (2R,3R)-2,3-dihydroxy-3-methylpentanoate + NADP(+) = (S)-2-ethyl-2-hydroxy-3-oxobutanoate + NADPH + H(+). It participates in amino-acid biosynthesis; L-isoleucine biosynthesis; L-isoleucine from 2-oxobutanoate: step 2/4. The protein operates within amino-acid biosynthesis; L-valine biosynthesis; L-valine from pyruvate: step 2/4. Its function is as follows. Involved in the biosynthesis of branched-chain amino acids (BCAA). Catalyzes an alkyl-migration followed by a ketol-acid reduction of (S)-2-acetolactate (S2AL) to yield (R)-2,3-dihydroxy-isovalerate. In the isomerase reaction, S2AL is rearranged via a Mg-dependent methyl migration to produce 3-hydroxy-3-methyl-2-ketobutyrate (HMKB). In the reductase reaction, this 2-ketoacid undergoes a metal-dependent reduction by NADPH to yield (R)-2,3-dihydroxy-isovalerate. The polypeptide is Ketol-acid reductoisomerase (NADP(+)) 2 (Bacillus anthracis).